Consider the following 322-residue polypeptide: Cytochrome c biogenesis protein CcsA (322 aa).

8 helical membrane passes run 15–35, 45–65, 72–92, 98–120, 144–164, 226–246, 253–273, and 287–307; these read FSIV…VDGI, GMIV…TYSG, LYES…VPYF, YLST…GLLT, MILG…LLVI, GISL…VWAN, WNWD…AIYL, and AIVA…VNLL.

The protein belongs to the CcmF/CycK/Ccl1/NrfE/CcsA family. In terms of assembly, may interact with Ccs1.

The protein resides in the plastid. Its subcellular location is the chloroplast thylakoid membrane. In terms of biological role, required during biogenesis of c-type cytochromes (cytochrome c6 and cytochrome f) at the step of heme attachment. This chain is Cytochrome c biogenesis protein CcsA, found in Coffea arabica (Arabian coffee).